The chain runs to 605 residues: uncharacterized protein (605 aa).

Residues 22–93 (FTEPARFYPS…KQGTAVHGAE (72 aa)) are disordered. A compositionally biased stretch (low complexity) spans 46-57 (SENASSSVPSHS).

This is an uncharacterized protein from Treponema pallidum (strain Nichols).